Consider the following 178-residue polypeptide: Interleukin-10 (178 aa).

Positions Met1–Pro18 are cleaved as a signal peptide. 2 disulfide bridges follow: Cys30/Cys126 and Cys80/Cys132. N-linked (GlcNAc...) asparagine glycosylation occurs at Asn134.

It belongs to the IL-10 family. As to quaternary structure, homodimer. Interacts with IL10RA and IL10RB.

It is found in the secreted. Its function is as follows. Major immune regulatory cytokine that acts on many cells of the immune system where it has profound anti-inflammatory functions, limiting excessive tissue disruption caused by inflammation. Mechanistically, IL10 binds to its heterotetrameric receptor comprising IL10RA and IL10RB leading to JAK1 and STAT2-mediated phosphorylation of STAT3. In turn, STAT3 translocates to the nucleus where it drives expression of anti-inflammatory mediators. Targets antigen-presenting cells (APCs) such as macrophages and monocytes and inhibits their release of pro-inflammatory cytokines including granulocyte-macrophage colony-stimulating factor /GM-CSF, granulocyte colony-stimulating factor/G-CSF, IL-1 alpha, IL-1 beta, IL-6, IL-8 and TNF-alpha. Also interferes with antigen presentation by reducing the expression of MHC-class II and co-stimulatory molecules, thereby inhibiting their ability to induce T cell activation. In addition, controls the inflammatory response of macrophages by reprogramming essential metabolic pathways including mTOR signaling. The sequence is that of Interleukin-10 (IL10) from Meriones unguiculatus (Mongolian jird).